A 502-amino-acid polypeptide reads, in one-letter code: MEEFKRYLELDRSQQHDFIYPLIFQEYIYALAHDRGLNRSIVFENRDYDNKSSLLIRKRLITXXXXXXXXXXXXXXXXKNKFLGYNTNFDSQMIFEGFAVVVEIPFYLQLLSSLEGKEIVKSHNLRSLHSIFPXXXXXXXXXXXXXXXXXXXXXXMEILVRTLRYWVKDPSSLHLLRFFLHEYPNRNSLITPKKYSFSFSKRNQKFFLFLYNFHVCEYESIFVFLRNQSSHLCSISFETFLERILFYKKIELEVFVKDFKGILWVFKDPFLHYVRYRGKSILASNGSSLLMNKWKYYLVNFWECYFSIWAQPRRIHINQLSNNSFDFLGYLSSVRLKPSMVRTQMIENSFLIENASKKFDTLVPITPMIASLSKAKFCNVLGHPMNKXVWDGLSDSDIIERIGRLYXNLSHYYSGSLKKMNLXRIKFILRILLCGTLASKHKGTLRSVLNRLGVGLLVEFITEEEQVFYLTFQKASSTSRKLYQRRIWYLDIFCVNDTANHE.

This sequence belongs to the intron maturase 2 family. MatK subfamily.

It is found in the plastid. The protein localises to the chloroplast. Usually encoded in the trnK tRNA gene intron. Probably assists in splicing its own and other chloroplast group II introns. The sequence is that of Maturase K from Vaccinium vitis-idaea (Mountain cranberry).